A 99-amino-acid polypeptide reads, in one-letter code: Large ribosomal subunit protein uL23 (99 aa).

It belongs to the universal ribosomal protein uL23 family. Part of the 50S ribosomal subunit. Contacts protein L29, and trigger factor when it is bound to the ribosome.

In terms of biological role, one of the early assembly proteins it binds 23S rRNA. One of the proteins that surrounds the polypeptide exit tunnel on the outside of the ribosome. Forms the main docking site for trigger factor binding to the ribosome. The sequence is that of Large ribosomal subunit protein uL23 from Francisella philomiragia subsp. philomiragia (strain ATCC 25017 / CCUG 19701 / FSC 153 / O#319-036).